Consider the following 82-residue polypeptide: U1-theraphotoxin-Ct1b (82 aa).

Residues 1-23 form the signal peptide; sequence MRTFTLIAILTCALLVIYHAAEA. A propeptide spanning residues 24-44 is cleaved from the precursor; sequence EELEAKDVIESKALATLDEER.

It belongs to the neurotoxin 12 (Hwtx-2) family. 03 (juruin) subfamily. Post-translationally, contains 3 disulfide bonds. Two different connectivities are observed in similar proteins (C1-C3, C2-C5, C4-C6 or C1-C4, C2-C5, C3-C6). In terms of tissue distribution, expressed by the venom gland.

It is found in the secreted. Functionally, this toxin causes paralysis and death to sheep blowflies. It does not target insect sodium channels. The sequence is that of U1-theraphotoxin-Ct1b from Coremiocnemis tropix (Australian tarantula spider).